Reading from the N-terminus, the 474-residue chain is tRNA-2-methylthio-N(6)-dimethylallyladenosine synthase (474 aa).

The MTTase N-terminal domain occupies 3–120 (KKLHIKTWGC…LPEMINSVRG (118 aa)). [4Fe-4S] cluster is bound by residues C12, C49, C83, C157, C161, and C164. Residues 143–375 (RAEGPTAFVS…QERINQQAMA (233 aa)) form the Radical SAM core domain. The TRAM domain maps to 378–441 (RRMLGSTQRI…PNSLRGKVVR (64 aa)).

It belongs to the methylthiotransferase family. MiaB subfamily. As to quaternary structure, monomer. It depends on [4Fe-4S] cluster as a cofactor.

It is found in the cytoplasm. It catalyses the reaction N(6)-dimethylallyladenosine(37) in tRNA + (sulfur carrier)-SH + AH2 + 2 S-adenosyl-L-methionine = 2-methylsulfanyl-N(6)-dimethylallyladenosine(37) in tRNA + (sulfur carrier)-H + 5'-deoxyadenosine + L-methionine + A + S-adenosyl-L-homocysteine + 2 H(+). Its function is as follows. Catalyzes the methylthiolation of N6-(dimethylallyl)adenosine (i(6)A), leading to the formation of 2-methylthio-N6-(dimethylallyl)adenosine (ms(2)i(6)A) at position 37 in tRNAs that read codons beginning with uridine. This Salmonella arizonae (strain ATCC BAA-731 / CDC346-86 / RSK2980) protein is tRNA-2-methylthio-N(6)-dimethylallyladenosine synthase.